We begin with the raw amino-acid sequence, 389 residues long: Glutamate 5-kinase (389 aa).

K16 serves as a coordination point for ATP. Substrate is bound by residues S56, D143, and N155. 175–176 is a binding site for ATP; the sequence is SD. The region spanning 281 to 358 is the PUA domain; the sequence is AGELHVDDGA…AEIEAILGYA (78 aa).

Belongs to the glutamate 5-kinase family.

Its subcellular location is the cytoplasm. The enzyme catalyses L-glutamate + ATP = L-glutamyl 5-phosphate + ADP. It participates in amino-acid biosynthesis; L-proline biosynthesis; L-glutamate 5-semialdehyde from L-glutamate: step 1/2. Its function is as follows. Catalyzes the transfer of a phosphate group to glutamate to form L-glutamate 5-phosphate. The chain is Glutamate 5-kinase from Rhizobium etli (strain CIAT 652).